The sequence spans 510 residues: NAD(P)H-quinone oxidoreductase subunit 2 A, chloroplastic (510 aa).

The next 12 membrane-spanning stretches (helical) occupy residues 31-51 (FIFP…IDLT), 59-79 (WFYF…LFRW), 99-119 (IFQF…VEYI), 124-144 (MAIT…MFLC), 149-169 (LITI…LSGY), 183-203 (YLLM…WLYG), 229-249 (ISIA…PAPF), 295-315 (WHLL…LLAI), 323-343 (MLAY…IVGD), 354-374 (YMLF…LFGL), 395-415 (ALSL…AGFF), and 418-438 (LYLF…IGLL).

Belongs to the complex I subunit 2 family. NDH is composed of at least 16 different subunits, 5 of which are encoded in the nucleus.

Its subcellular location is the plastid. It localises to the chloroplast thylakoid membrane. The catalysed reaction is a plastoquinone + NADH + (n+1) H(+)(in) = a plastoquinol + NAD(+) + n H(+)(out). It catalyses the reaction a plastoquinone + NADPH + (n+1) H(+)(in) = a plastoquinol + NADP(+) + n H(+)(out). Functionally, NDH shuttles electrons from NAD(P)H:plastoquinone, via FMN and iron-sulfur (Fe-S) centers, to quinones in the photosynthetic chain and possibly in a chloroplast respiratory chain. The immediate electron acceptor for the enzyme in this species is believed to be plastoquinone. Couples the redox reaction to proton translocation, and thus conserves the redox energy in a proton gradient. The sequence is that of NAD(P)H-quinone oxidoreductase subunit 2 A, chloroplastic from Saccharum officinarum (Sugarcane).